Here is a 275-residue protein sequence, read N- to C-terminus: NH(3)-dependent NAD(+) synthetase (275 aa).

50–57 (GISGGVDS) contacts ATP. D56 contacts Mg(2+). Residue R147 participates in deamido-NAD(+) binding. T167 serves as a coordination point for ATP. E172 provides a ligand contact to Mg(2+). Deamido-NAD(+) contacts are provided by K180 and D187. ATP-binding residues include K196 and T218. A deamido-NAD(+)-binding site is contributed by 267–268 (HK).

This sequence belongs to the NAD synthetase family. As to quaternary structure, homodimer.

The catalysed reaction is deamido-NAD(+) + NH4(+) + ATP = AMP + diphosphate + NAD(+) + H(+). Its pathway is cofactor biosynthesis; NAD(+) biosynthesis; NAD(+) from deamido-NAD(+) (ammonia route): step 1/1. Functionally, catalyzes the ATP-dependent amidation of deamido-NAD to form NAD. Uses ammonia as a nitrogen source. In Pseudomonas aeruginosa (strain LESB58), this protein is NH(3)-dependent NAD(+) synthetase.